The sequence spans 297 residues: ATP synthase subunit gamma, mitochondrial (297 aa).

It belongs to the ATPase gamma chain family. F-type ATPases have 2 components, CF(1) - the catalytic core - and CF(0) - the membrane proton channel. CF(1) has five subunits: alpha(3), beta(3), gamma(1), delta(1), epsilon(1). CF(0) has three main subunits: a, b and c.

The protein resides in the mitochondrion. It is found in the mitochondrion inner membrane. Its function is as follows. Mitochondrial membrane ATP synthase (F(1)F(0) ATP synthase or Complex V) produces ATP from ADP in the presence of a proton gradient across the membrane which is generated by electron transport complexes of the respiratory chain. F-type ATPases consist of two structural domains, F(1) - containing the extramembraneous catalytic core, and F(0) - containing the membrane proton channel, linked together by a central stalk and a peripheral stalk. During catalysis, ATP synthesis in the catalytic domain of F(1) is coupled via a rotary mechanism of the central stalk subunits to proton translocation. Part of the complex F(1) domain and the central stalk which is part of the complex rotary element. The gamma subunit protrudes into the catalytic domain formed of alpha(3)beta(3). Rotation of the central stalk against the surrounding alpha(3)beta(3) subunits leads to hydrolysis of ATP in three separate catalytic sites on the beta subunits. This is ATP synthase subunit gamma, mitochondrial from Drosophila melanogaster (Fruit fly).